The chain runs to 133 residues: MAIQQPEQYYGTGRRKAAVARVFLRPGEGKIVVNGKEFQTYFRGLLRAVNALQGFRETGTAGRFDAVITVTGGGPSGQADAIKLGIARALLKVNPDFRAQMKPKGLLTRDPREVERKKYGLKKARRAPQFSKR.

The interval 101 to 133 (MKPKGLLTRDPREVERKKYGLKKARRAPQFSKR) is disordered. Residues 107-118 (LTRDPREVERKK) are compositionally biased toward basic and acidic residues. Residues 119–133 (YGLKKARRAPQFSKR) show a composition bias toward basic residues.

This sequence belongs to the universal ribosomal protein uS9 family.

The sequence is that of Small ribosomal subunit protein uS9 from Deinococcus radiodurans (strain ATCC 13939 / DSM 20539 / JCM 16871 / CCUG 27074 / LMG 4051 / NBRC 15346 / NCIMB 9279 / VKM B-1422 / R1).